The following is a 287-amino-acid chain: Inorganic pyrophosphatase (287 aa).

Arginine 79 is a binding site for diphosphate. Mg(2+) contacts are provided by aspartate 116, aspartate 121, and aspartate 153.

The protein belongs to the PPase family. Mg(2+) is required as a cofactor.

The protein localises to the cytoplasm. The catalysed reaction is diphosphate + H2O = 2 phosphate + H(+). This chain is Inorganic pyrophosphatase (IPP1), found in Debaryomyces hansenii (strain ATCC 36239 / CBS 767 / BCRC 21394 / JCM 1990 / NBRC 0083 / IGC 2968) (Yeast).